The chain runs to 434 residues: 3-phosphoshikimate 1-carboxyvinyltransferase (434 aa).

Residues K22, S23, and R27 each contribute to the 3-phosphoshikimate site. K22 lines the phosphoenolpyruvate pocket. Residues G93 and R121 each coordinate phosphoenolpyruvate. 3-phosphoshikimate-binding residues include S168, S169, Q170, S199, D320, and K347. Q170 is a binding site for phosphoenolpyruvate. Catalysis depends on D320, which acts as the Proton acceptor. Positions 351, 394, and 419 each coordinate phosphoenolpyruvate.

The protein belongs to the EPSP synthase family. In terms of assembly, monomer.

The protein localises to the cytoplasm. It catalyses the reaction 3-phosphoshikimate + phosphoenolpyruvate = 5-O-(1-carboxyvinyl)-3-phosphoshikimate + phosphate. It functions in the pathway metabolic intermediate biosynthesis; chorismate biosynthesis; chorismate from D-erythrose 4-phosphate and phosphoenolpyruvate: step 6/7. Functionally, catalyzes the transfer of the enolpyruvyl moiety of phosphoenolpyruvate (PEP) to the 5-hydroxyl of shikimate-3-phosphate (S3P) to produce enolpyruvyl shikimate-3-phosphate and inorganic phosphate. The chain is 3-phosphoshikimate 1-carboxyvinyltransferase from Burkholderia lata (strain ATCC 17760 / DSM 23089 / LMG 22485 / NCIMB 9086 / R18194 / 383).